Reading from the N-terminus, the 695-residue chain is U1 snRNP-associated protein usp107 (695 aa).

The segment covering 85–96 (RDNESQQKDRKN) has biased composition (basic and acidic residues). A disordered region spans residues 85–134 (RDNESQQKDRKNLPRNQKSNEIQEKQTFQTPSSEKSTTERESRPFVPPNS). The segment covering 98–113 (PRNQKSNEIQEKQTFQ) has biased composition (polar residues). The RRM domain occupies 139-221 (RMLFIGNIPK…PSTRLSLITD (83 aa)). Residues 265–369 (DVRSRIERAA…NLLSKHRISR (105 aa)) adopt a coiled-coil conformation. Basic and acidic residues-rich tracts occupy residues 487–506 (EEDADALDRKEEERELRTRG) and 548–561 (SERREFGLPERLLL). Disordered regions lie at residues 487–509 (EEDADALDRKEEERELRTRGEGA) and 540–590 (QTKK…AEKT). The PWI domain occupies 605-695 (ESLWALPIDW…HVLLILRSEA (91 aa)).

In terms of assembly, component of the U1 snRNP particle, a subcomplex of the spliceosome. Interacts with prp5 and usp102.

The protein resides in the cytoplasm. The protein localises to the nucleus. In terms of biological role, component of the U1 snRNP particle, which recognizes and binds the 5'-splice site of pre-mRNA. Together with other non-snRNP factors, U1 snRNP forms the spliceosomal commitment complex, that targets pre-mRNA to the splicing pathway. The chain is U1 snRNP-associated protein usp107 (usp107) from Schizosaccharomyces pombe (strain 972 / ATCC 24843) (Fission yeast).